The chain runs to 302 residues: Probable lipid kinase YegS-like (302 aa).

In terms of domain architecture, DAGKc spans 1-129 (MDKDKVLLVL…IDLGAVNGKL (129 aa)). ATP-binding positions include Thr-39, 65–71 (GDGTLRE), and Thr-92. Mg(2+) contacts are provided by Arg-210, Asp-213, and Leu-215. Glu-268 functions as the Proton acceptor in the catalytic mechanism.

The protein belongs to the diacylglycerol/lipid kinase family. YegS lipid kinase subfamily. Requires Mg(2+) as cofactor. Ca(2+) serves as cofactor.

The protein localises to the cytoplasm. Its function is as follows. Probably phosphorylates lipids; the in vivo substrate is unknown. This is Probable lipid kinase YegS-like from Pseudomonas aeruginosa (strain UCBPP-PA14).